The sequence spans 387 residues: 3-ketoacyl-CoA thiolase (387 aa).

Cysteine 91 functions as the Acyl-thioester intermediate in the catalytic mechanism. Catalysis depends on proton acceptor residues histidine 343 and cysteine 373.

The protein belongs to the thiolase-like superfamily. Thiolase family. In terms of assembly, heterotetramer of two alpha chains (FadB) and two beta chains (FadA).

The protein resides in the cytoplasm. It carries out the reaction an acyl-CoA + acetyl-CoA = a 3-oxoacyl-CoA + CoA. It participates in lipid metabolism; fatty acid beta-oxidation. Its function is as follows. Catalyzes the final step of fatty acid oxidation in which acetyl-CoA is released and the CoA ester of a fatty acid two carbons shorter is formed. The chain is 3-ketoacyl-CoA thiolase from Shewanella oneidensis (strain ATCC 700550 / JCM 31522 / CIP 106686 / LMG 19005 / NCIMB 14063 / MR-1).